The sequence spans 293 residues: Energy-coupling factor transporter ATP-binding protein EcfA2 (293 aa).

In terms of domain architecture, ABC transporter spans 3 to 246 (ITFQKVEHRY…ADELEKIGVD (244 aa)). Residue 40-47 (GHTGSGKS) coordinates ATP.

Belongs to the ABC transporter superfamily. Energy-coupling factor EcfA family. In terms of assembly, forms a stable energy-coupling factor (ECF) transporter complex composed of 2 membrane-embedded substrate-binding proteins (S component), 2 ATP-binding proteins (A component) and 2 transmembrane proteins (T component).

It is found in the cell membrane. Functionally, ATP-binding (A) component of a common energy-coupling factor (ECF) ABC-transporter complex. Unlike classic ABC transporters this ECF transporter provides the energy necessary to transport a number of different substrates. This chain is Energy-coupling factor transporter ATP-binding protein EcfA2, found in Bacillus thuringiensis (strain Al Hakam).